A 2250-amino-acid chain; its full sequence is DNA polymerase epsilon catalytic subunit A (2250 aa).

Disordered stretches follow at residues 1–63, 235–259, and 1990–2010; these read MPSR…GTAA, NGHGDDENRAWGAEDDTKKKKDKEP, and PGTEATSTMNPTKEKEKKAAS. Residues 32–41 show a composition bias toward gly residues; that stretch reads GGGGGGGGVA. The segment covering 249–259 has biased composition (basic and acidic residues); it reads DDTKKKKDKEP. Residues 1990-2000 are compositionally biased toward polar residues; sequence PGTEATSTMNP. Zn(2+) contacts are provided by cysteine 2118, cysteine 2121, cysteine 2156, and cysteine 2159. A CysA-type zinc finger spans residues 2118–2159; sequence CKKCNAIRDVDLCRDPDRLPSVNPDSGEMLEPARKNWVCHKC. The [4Fe-4S] cluster site is built by cysteine 2190, cysteine 2193, cysteine 2205, and cysteine 2207. The CysB motif motif lies at 2190–2207; that stretch reads CLKCSQTKSDNLAATCKC.

It belongs to the DNA polymerase type-B family. In terms of assembly, heterotetramer. Consists of 4 subunits: POL2, DPB2, DPB3 and DPB4. [4Fe-4S] cluster serves as cofactor.

The protein resides in the nucleus. The catalysed reaction is DNA(n) + a 2'-deoxyribonucleoside 5'-triphosphate = DNA(n+1) + diphosphate. Functionally, DNA polymerase II participates in chromosomal DNA replication. The sequence is that of DNA polymerase epsilon catalytic subunit A (POL2) from Cryptococcus neoformans var. neoformans serotype D (strain JEC21 / ATCC MYA-565) (Filobasidiella neoformans).